Consider the following 341-residue polypeptide: Cell division protein FtsX (341 aa).

Residues 1–34 (MSTTRTPKVSERVAPKPADPQPAKKKRGEDDDGP) are disordered. Topologically, residues 1–65 (MSTTRTPKVS…RRLGKQPIGS (65 aa)) are cytoplasmic. A helical transmembrane segment spans residues 66 to 86 (FFTCLVMAVALSMPMGLSLLL). The Periplasmic portion of the chain corresponds to 87-212 (KNIEQLGGSW…LAAILKLGDR (126 aa)). Residues 213 to 233 (FVFGLAVMLISALLLVIGNTI) form a helical membrane-spanning segment. Residues 234–263 (RLHIENRRIEIEVIKLVGGTDAYVRRPFLY) lie on the Cytoplasmic side of the membrane. A helical membrane pass occupies residues 264-284 (MGALYGLGAGLLAWGILAFGL). The Periplasmic segment spans residues 285–311 (NWLNEAVVGLSGLYGSDFALGGVPASD). Residues 312–332 (GLSLLIGAVLLGYIGAWIAVA) traverse the membrane as a helical segment. Topologically, residues 333 to 341 (RHLNELAPR) are cytoplasmic.

The protein belongs to the ABC-4 integral membrane protein family. FtsX subfamily. As to quaternary structure, forms a membrane-associated complex with FtsE.

It is found in the cell inner membrane. Its function is as follows. Part of the ABC transporter FtsEX involved in cellular division. In Pseudomonas putida (Arthrobacter siderocapsulatus), this protein is Cell division protein FtsX.